The primary structure comprises 306 residues: SPbeta prophage-derived uncharacterized protein YonG (306 aa).

This Bacillus subtilis (strain 168) protein is SPbeta prophage-derived uncharacterized protein YonG (yonG).